Here is a 197-residue protein sequence, read N- to C-terminus: Large ribosomal subunit protein uL10 (197 aa).

The tract at residues 163–197 is disordered; that stretch reads GAPAAAEAPAAEESADSAAEAAAEAPAEAPAAEEN.

Belongs to the universal ribosomal protein uL10 family. In terms of assembly, part of the ribosomal stalk of the 50S ribosomal subunit. The N-terminus interacts with L11 and the large rRNA to form the base of the stalk. The C-terminus forms an elongated spine to which L12 dimers bind in a sequential fashion forming a multimeric L10(L12)X complex.

Functionally, forms part of the ribosomal stalk, playing a central role in the interaction of the ribosome with GTP-bound translation factors. This is Large ribosomal subunit protein uL10 from Pseudarthrobacter chlorophenolicus (strain ATCC 700700 / DSM 12829 / CIP 107037 / JCM 12360 / KCTC 9906 / NCIMB 13794 / A6) (Arthrobacter chlorophenolicus).